The primary structure comprises 72 residues: Conotoxin Gla(2)-TxVI/A (72 aa).

Residues 1 to 19 (MQKLIILLLVAAVLMSTQA) form the signal peptide. A propeptide spanning residues 20–44 (LFQEKRPMKKIDFLSKGKTDAEKQQ) is cleaved from the precursor. 3 disulfides stabilise this stretch: Cys48/Cys62, Cys55/Cys66, and Cys61/Cys70. Position 56 is a 4-carboxyglutamate (Glu56). 4-hydroxyproline is present on Pro58. Ser71 bears the Serine amide mark.

The protein belongs to the conotoxin O2 superfamily. Brominated at one of the Trp residues. In terms of tissue distribution, expressed by the venom duct.

It localises to the secreted. This chain is Conotoxin Gla(2)-TxVI/A, found in Conus textile (Cloth-of-gold cone).